Consider the following 100-residue polypeptide: Class II hydrophobin CU (100 aa).

The signal sequence occupies residues 1 to 25; sequence MQFSIATIALFLSSAMAAPYSGNSN. Intrachain disulfides connect Cys32/Cys82, Cys42/Cys72, Cys43/Cys55, and Cys83/Cys94.

The protein belongs to the cerato-ulmin hydrophobin family. Homotetramer. Further self-assembles to form highly ordered films at water-air interfaces through intermolecular interactions.

Its subcellular location is the secreted. The protein localises to the cell wall. Aerial growth, conidiation, and dispersal of filamentous fungi in the environment rely upon a capability of their secreting small amphipathic proteins called hydrophobins (HPBs) with low sequence identity. Class I can self-assemble into an outermost layer of rodlet bundles on aerial cell surfaces, conferring cellular hydrophobicity that supports fungal growth, development and dispersal; whereas Class II form highly ordered films at water-air interfaces through intermolecular interactions but contribute nothing to the rodlet structure. CU is a class II hydrophobin that is implicated in the pathogenicity of this fungus on elm trees. Required for hydrophobicity and adherence of the cells and acts as a parasitic fitness factor by protecting infectious propagules from desiccation. Reduces the interfacial tension of both oil-water and air-water interfaces. In Ophiostoma ulmi (Dutch elm disease fungus), this protein is Class II hydrophobin CU.